A 112-amino-acid polypeptide reads, in one-letter code: Cortistatin (112 aa).

The first 27 residues, 1–27, serve as a signal peptide directing secretion; the sequence is MGGCSTRGKRPSALSLLLLLLLSGIAA. The propeptide occupies 28–81; the sequence is SALPLESGPTGQDSVQDATGGRRTGLLTFLAWWHEWASQDSSSTAFEGGTPELS. The segment at 66 to 101 is disordered; sequence QDSSSTAFEGGTPELSKRQERPPLQQPPHRDKKPCK. The cysteines at positions 100 and 111 are disulfide-linked.

This sequence belongs to the somatostatin family. Interneurons in the cerebral cortex and hippocampus.

The protein localises to the secreted. Its function is as follows. Neuropeptide with neuronal depressant and sleep-modulating properties. This is Cortistatin (Cort) from Rattus norvegicus (Rat).